The following is a 263-amino-acid chain: Aquaporin-8 (263 aa).

Residues 1-38 (MSGEQTPMCSMDLREIKGKETNMADSYHGMSWYEQYIQ) lie on the Cytoplasmic side of the membrane. A helical membrane pass occupies residues 39–59 (PCVVELLGSALFIFIGCLSVI). Cys-55 is modified (cysteine persulfide). At Cys-55 the chain carries Cysteine sulfenic acid (-SOH). Residues 60-86 (ENSPNTGLLQPALAHGLALGLIIATLG) are Extracellular-facing. A helical transmembrane segment spans residues 87-107 (NISGGHFNPAVSLAVTLVGGL). The NPA 1 signature appears at 94 to 96 (NPA). At 108–109 (KT) the chain is on the cytoplasmic side. A helical transmembrane segment spans residues 110-130 (MLLIPYWVSQLFGGMIGAALA). Topologically, residues 131–158 (KVVSPEERFWNASGAAFAIVQEQEQVAE) are extracellular. N-linked (GlcNAc...) asparagine glycosylation occurs at Asn-141. The helical transmembrane segment at 159-179 (ALGVEIVMTMLLVLAVCMGAV) threads the bilayer. At 180–185 (NEKTMG) the chain is on the cytoplasmic side. Residues 186-206 (PLAPFSIGFSVIVDILAGGGI) form a helical membrane-spanning segment. Residues 207 to 230 (SGACMNPARAFGPAVMAGYWDFHW) are Extracellular-facing. Positions 212-214 (NPA) match the NPA 2 motif. The helical transmembrane segment at 231–251 (IYWLGPLLAGLFVGLLIRLFI) threads the bilayer. The Cytoplasmic portion of the chain corresponds to 252–263 (GDEKTRLILKSR).

It belongs to the MIP/aquaporin (TC 1.A.8) family. Post-translationally, N-glycosylated. In terms of processing, sulfenylation at Cys-55(C55-SOH) when hydrogen peroxide flows through the AQP8 channel, making it susceptible to hydrogen sulfide produced by CBS. Persulfidation at Cys-55 is required to gate AQP8 channel; under stress condition, hydrogen peroxide accumulates in the cell leading to CBS activation that produces hydrogen sulfide inducing persulfidation of oxidized Cys-55 (C55-SOH). Highly expressed in sperm, pancreas and liver. Expressed in hepatocytes, acinal cells of pancreas and salivary gland, and absorptive colonic epithelial cells. Expressed in the myoepithelium of submandibular and parotid glands. Expressed in pancreatic beta-cells. Expressed in testis but not in epididymis. Expressed in small intestine.

Its subcellular location is the cell membrane. It is found in the mitochondrion inner membrane. It localises to the apical cell membrane. The protein resides in the basolateral cell membrane. The protein localises to the smooth endoplasmic reticulum membrane. The catalysed reaction is H2O(in) = H2O(out). It carries out the reaction NH4(+)(in) = NH4(+)(out). The enzyme catalyses H2O2(out) = H2O2(in). It catalyses the reaction formamide(out) = formamide(in). The catalysed reaction is methylamine(out) = methylamine(in). Its activity is regulated as follows. Reversibly gated by a two-step sulfenylation-persulfidation process in cells undergoing diverse stresses. In terms of biological role, channel that allows the facilitated permeation of water and uncharged molecules, such as hydrogen peroxide and the neutral form of ammonia (NH3), through cellular membranes such as plasma membrane, inner mitochondrial membrane and endoplasmic reticulum membrane of several tissues. The transport of ammonia neutral form induces a parallel transport of proton, at alkaline pH when the concentration of ammonia is high. However, it is unclear whether the transport of proton takes place via the aquaporin or via an endogenous pathway. Also, may transport ammonia analogs such as formamide and methylamine, a transport favourited at basic pH due to the increase of unprotonated (neutral) form, which is expected to favor diffusion. Does not transport urea or glycerol. The water transport mechanism is mercury- and copper-sensitive and passive in response to osmotic driving forces. At the canicular plasma membrane, mediates the osmotic transport of water toward the bile canaliculus and facilitates the cAMP-induced bile canalicular water secretion, a process involved in bile formation. In addition, mediates the hydrogen peroxide release from hepatocyte mitochondria that modulates the SREBF2-mediated cholesterol synthesis and facilitates the mitochondrial ammonia uptake which is metabolized into urea, mainly under glucagon stimulation. In B cells, transports the CYBB-generated hydrogen peroxide from the external leaflet of the plasma membrane to the cytosol to promote B cell activation and differentiation for signal amplification. In the small intestine and colon system, mediates water transport through mitochondria and apical membrane of epithelial cells. May play an important role in the adaptive response of proximal tubule cells to acidosis possibly facilitating mitochondrial ammonia transport. The chain is Aquaporin-8 from Rattus norvegicus (Rat).